We begin with the raw amino-acid sequence, 426 residues long: MNIISVGVNHKTAPIEIRERIALSEVQNKEFVTDLVSSGLASEAMVVSTCNRTELYVVPGMPEVNCDYLKDYIISYKDARNAVRPEHFFNRFYCGTARHLFEVSSAIDSLVLGEGQILGQVKDAYRIAAEVGTAGILLTRLCHTAFSVAKKVKTRTKLMEGAVSVSYAAVELAQKIFSNLSMKKVLLIGAGETGELAAKHMYAKNARNIVITNRTQSKAEALAEELGTNRVLPYESYKEHLHEFDIIITAVSTKEYILNAAEMQQSMAKRRLKPVIILDLGLPRNVDPEVGALQNMFLKDIDALKHIIDKNLERRRAELPKVKSIIDEELIGFGQWINTLKVRPTIVDLQSKFIEIKEKELERYRHKVSEEELKRMEHLTDRILKKILHHPIKMLKAPVDTADNIPSKVNLVRNIFDLEEPNQSLQ.

Residues 49–52 (TCNR), serine 109, 114–116 (EGQ), and glutamine 120 each bind substrate. Cysteine 50 acts as the Nucleophile in catalysis. An NADP(+)-binding site is contributed by 189-194 (GAGETG).

This sequence belongs to the glutamyl-tRNA reductase family. As to quaternary structure, homodimer.

It catalyses the reaction (S)-4-amino-5-oxopentanoate + tRNA(Glu) + NADP(+) = L-glutamyl-tRNA(Glu) + NADPH + H(+). It functions in the pathway porphyrin-containing compound metabolism; protoporphyrin-IX biosynthesis; 5-aminolevulinate from L-glutamyl-tRNA(Glu): step 1/2. Its function is as follows. Catalyzes the NADPH-dependent reduction of glutamyl-tRNA(Glu) to glutamate 1-semialdehyde (GSA). The polypeptide is Glutamyl-tRNA reductase (hemA) (Chlorobaculum parvum (strain DSM 263 / NCIMB 8327) (Chlorobium vibrioforme subsp. thiosulfatophilum)).